The following is a 544-amino-acid chain: CTP synthase (544 aa).

Residues 1-265 (MTKFIFVTGG…DNIITEQLQL (265 aa)) form an amidoligase domain region. S13 is a binding site for CTP. S13 is a UTP binding site. Residues 14 to 19 (SLGKGI) and D71 contribute to the ATP site. Positions 71 and 139 each coordinate Mg(2+). Residues 146–148 (DIE), 186–191 (KTKPTQ), and K222 contribute to the CTP site. Residues 186-191 (KTKPTQ) and K222 each bind UTP. Positions 290-544 (KIAMVGKYVD…VKAALNNKKA (255 aa)) constitute a Glutamine amidotransferase type-1 domain. L-glutamine is bound at residue G353. C380 serves as the catalytic Nucleophile; for glutamine hydrolysis. L-glutamine-binding positions include 381 to 384 (LGMQ), E404, and R471. Catalysis depends on residues H517 and E519.

Belongs to the CTP synthase family. As to quaternary structure, homotetramer.

It catalyses the reaction UTP + L-glutamine + ATP + H2O = CTP + L-glutamate + ADP + phosphate + 2 H(+). The catalysed reaction is L-glutamine + H2O = L-glutamate + NH4(+). The enzyme catalyses UTP + NH4(+) + ATP = CTP + ADP + phosphate + 2 H(+). Its pathway is pyrimidine metabolism; CTP biosynthesis via de novo pathway; CTP from UDP: step 2/2. With respect to regulation, allosterically activated by GTP, when glutamine is the substrate; GTP has no effect on the reaction when ammonia is the substrate. The allosteric effector GTP functions by stabilizing the protein conformation that binds the tetrahedral intermediate(s) formed during glutamine hydrolysis. Inhibited by the product CTP, via allosteric rather than competitive inhibition. Functionally, catalyzes the ATP-dependent amination of UTP to CTP with either L-glutamine or ammonia as the source of nitrogen. Regulates intracellular CTP levels through interactions with the four ribonucleotide triphosphates. In Neisseria meningitidis serogroup B (strain ATCC BAA-335 / MC58), this protein is CTP synthase.